The following is a 253-amino-acid chain: Tryptophan synthase alpha chain (253 aa).

Active-site proton acceptor residues include E45 and D56.

Belongs to the TrpA family. Tetramer of two alpha and two beta chains.

The catalysed reaction is (1S,2R)-1-C-(indol-3-yl)glycerol 3-phosphate + L-serine = D-glyceraldehyde 3-phosphate + L-tryptophan + H2O. It participates in amino-acid biosynthesis; L-tryptophan biosynthesis; L-tryptophan from chorismate: step 5/5. Functionally, the alpha subunit is responsible for the aldol cleavage of indoleglycerol phosphate to indole and glyceraldehyde 3-phosphate. In Flavobacterium psychrophilum (strain ATCC 49511 / DSM 21280 / CIP 103535 / JIP02/86), this protein is Tryptophan synthase alpha chain.